Reading from the N-terminus, the 337-residue chain is Ycf66-like protein (337 aa).

Residues 111–337 (TEAELDQLEP…GADDQERFDY (227 aa)) are disordered. The span at 113–123 (AELDQLEPEDE) shows a compositional bias: acidic residues. Composition is skewed to basic and acidic residues over residues 133–143 (RGYDDDARSGR) and 253–269 (FGDR…RPYE). The segment covering 304–316 (QSRSGNPRSQRPS) has biased composition (polar residues).

Belongs to the ycf66 family.

The chain is Ycf66-like protein from Synechocystis sp. (strain ATCC 27184 / PCC 6803 / Kazusa).